The primary structure comprises 386 residues: Interleukin-13 receptor subunit alpha-2 (386 aa).

The first 21 residues, 1 to 21, serve as a signal peptide directing secretion; the sequence is MAFIHLDVGFLYTLLVCTAFG. The Extracellular segment spans residues 22-338; the sequence is SMLSNAEIKV…CWKGDIWKET (317 aa). 3 Fibronectin type-III domains span residues 33–133, 138–234, and 239–338; these read PPQD…SPQG, KIQD…LQNI, and PPDY…WKET. Cys64 and Cys112 form a disulfide bridge. An N-linked (GlcNAc...) asparagine glycan is attached at Asn114. Intrachain disulfides connect Cys144–Cys154 and Cys183–Cys196. Residues Asn214 and Asn298 are each glycosylated (N-linked (GlcNAc...) asparagine). Cys268 and Cys315 are joined by a disulfide. Positions 321 to 325 match the WSXWS motif motif; that stretch reads WSEWS. The helical transmembrane segment at 339 to 359 threads the bilayer; that stretch reads LVFFLIPFAFVSIFVLVITCL. Topologically, residues 360 to 386 are cytoplasmic; sequence LLYKQRALLKTIFHTKKEVFSHQDTFC.

This sequence belongs to the type I cytokine receptor family. Type 5 subfamily. As to quaternary structure, interacts with IL4RA. Interacts with high affinity to interleukin-13 (IL13), but not to interleukin-4 (IL4). Cleaved by MMP8 leading to a soluble form that is also able to interact with IL13. Expressed in kidney, placenta, liver, skeletal muscle and thymus. Expression was not seen in whole blood and heart.

Its subcellular location is the cell membrane. Its function is as follows. Cell surface receptor that plays a role in the regulation of IL-13-mediated responses. Functions as a decoy receptor that inhibits IL-13- and IL-4-mediated signal transduction via the JAK-STAT pathway and thereby modulates immune responses and inflammation. Serves as a functional signaling receptor for IL-13 in an alternative pathway involving AP-1 ultimately leading to the production of TGFB1. The protein is Interleukin-13 receptor subunit alpha-2 (IL13RA2) of Canis lupus familiaris (Dog).